Here is a 310-residue protein sequence, read N- to C-terminus: Phosphoribosylaminoimidazole-succinocarboxamide synthase (310 aa).

It belongs to the SAICAR synthetase family.

It catalyses the reaction 5-amino-1-(5-phospho-D-ribosyl)imidazole-4-carboxylate + L-aspartate + ATP = (2S)-2-[5-amino-1-(5-phospho-beta-D-ribosyl)imidazole-4-carboxamido]succinate + ADP + phosphate + 2 H(+). The protein operates within purine metabolism; IMP biosynthesis via de novo pathway; 5-amino-1-(5-phospho-D-ribosyl)imidazole-4-carboxamide from 5-amino-1-(5-phospho-D-ribosyl)imidazole-4-carboxylate: step 1/2. This Dechloromonas aromatica (strain RCB) protein is Phosphoribosylaminoimidazole-succinocarboxamide synthase.